The following is a 328-amino-acid chain: YDG domain-containing protein At5g47150 (328 aa).

Positions 176–320 (GSVPGINIGD…KSVYKFKLCR (145 aa)) constitute a YDG domain.

It is found in the nucleus. This Arabidopsis thaliana (Mouse-ear cress) protein is YDG domain-containing protein At5g47150.